A 150-amino-acid chain; its full sequence is Transcriptional repressor NrdR (150 aa).

A zinc finger spans residues 3-34 (CPFCAHPDSKVVDSRPDKGGAAIRRRRECESC). The ATP-cone domain occupies 49 to 139 (PLVLKKDGRR…VYRSFKDVNE (91 aa)).

Belongs to the NrdR family. Zn(2+) serves as cofactor.

In terms of biological role, negatively regulates transcription of bacterial ribonucleotide reductase nrd genes and operons by binding to NrdR-boxes. This Geobacter metallireducens (strain ATCC 53774 / DSM 7210 / GS-15) protein is Transcriptional repressor NrdR.